The following is a 288-amino-acid chain: 4-diphosphocytidyl-2-C-methyl-D-erythritol kinase (288 aa).

Lysine 10 is a catalytic residue. 94–104 (PVAAGLGGGSS) contacts ATP. Aspartate 136 is a catalytic residue.

This sequence belongs to the GHMP kinase family. IspE subfamily.

It catalyses the reaction 4-CDP-2-C-methyl-D-erythritol + ATP = 4-CDP-2-C-methyl-D-erythritol 2-phosphate + ADP + H(+). Its pathway is isoprenoid biosynthesis; isopentenyl diphosphate biosynthesis via DXP pathway; isopentenyl diphosphate from 1-deoxy-D-xylulose 5-phosphate: step 3/6. Its function is as follows. Catalyzes the phosphorylation of the position 2 hydroxy group of 4-diphosphocytidyl-2C-methyl-D-erythritol. The chain is 4-diphosphocytidyl-2-C-methyl-D-erythritol kinase from Lactiplantibacillus plantarum (strain ATCC BAA-793 / NCIMB 8826 / WCFS1) (Lactobacillus plantarum).